Reading from the N-terminus, the 262-residue chain is Cytochrome c oxidase subunit 3 (262 aa).

Transmembrane regions (helical) follow at residues 39–59, 83–103, 120–140, 163–183, 201–221, and 240–260; these read YTMT…YQWW, GMIL…WAFF, VGII…ILLA, GLFF…YEYI, ATGF…ICFL, and AWYW…IYWW.

It belongs to the cytochrome c oxidase subunit 3 family. In terms of assembly, component of the cytochrome c oxidase (complex IV, CIV), a multisubunit enzyme composed of a catalytic core of 3 subunits and several supernumerary subunits. The complex exists as a monomer or a dimer and forms supercomplexes (SCs) in the inner mitochondrial membrane with ubiquinol-cytochrome c oxidoreductase (cytochrome b-c1 complex, complex III, CIII).

The protein localises to the mitochondrion inner membrane. The enzyme catalyses 4 Fe(II)-[cytochrome c] + O2 + 8 H(+)(in) = 4 Fe(III)-[cytochrome c] + 2 H2O + 4 H(+)(out). Its function is as follows. Component of the cytochrome c oxidase, the last enzyme in the mitochondrial electron transport chain which drives oxidative phosphorylation. The respiratory chain contains 3 multisubunit complexes succinate dehydrogenase (complex II, CII), ubiquinol-cytochrome c oxidoreductase (cytochrome b-c1 complex, complex III, CIII) and cytochrome c oxidase (complex IV, CIV), that cooperate to transfer electrons derived from NADH and succinate to molecular oxygen, creating an electrochemical gradient over the inner membrane that drives transmembrane transport and the ATP synthase. Cytochrome c oxidase is the component of the respiratory chain that catalyzes the reduction of oxygen to water. Electrons originating from reduced cytochrome c in the intermembrane space (IMS) are transferred via the dinuclear copper A center (CU(A)) of subunit 2 and heme A of subunit 1 to the active site in subunit 1, a binuclear center (BNC) formed by heme A3 and copper B (CU(B)). The BNC reduces molecular oxygen to 2 water molecules using 4 electrons from cytochrome c in the IMS and 4 protons from the mitochondrial matrix. The polypeptide is Cytochrome c oxidase subunit 3 (COIII) (Anopheles quadrimaculatus (Common malaria mosquito)).